The following is a 158-amino-acid chain: uncharacterized protein (158 aa).

The HTH hxlR-type domain occupies 13–110 (ESVGRALELV…WGDEYLPRPE (98 aa)).

This is an uncharacterized protein from Mycobacterium tuberculosis (strain ATCC 25618 / H37Rv).